Here is a 183-residue protein sequence, read N- to C-terminus: Glutathione-regulated potassium-efflux system ancillary protein KefG (183 aa).

Belongs to the NAD(P)H dehydrogenase (quinone) family. KefG subfamily. Interacts with KefB.

It is found in the cell inner membrane. The enzyme catalyses a quinone + NADH + H(+) = a quinol + NAD(+). It carries out the reaction a quinone + NADPH + H(+) = a quinol + NADP(+). In terms of biological role, regulatory subunit of a potassium efflux system that confers protection against electrophiles. Required for full activity of KefB. The protein is Glutathione-regulated potassium-efflux system ancillary protein KefG of Salmonella enteritidis PT4 (strain P125109).